A 309-amino-acid polypeptide reads, in one-letter code: Lipoyl synthase (309 aa).

Cys-56, Cys-61, Cys-67, Cys-82, Cys-86, Cys-89, and Ser-296 together coordinate [4Fe-4S] cluster. One can recognise a Radical SAM core domain in the interval Phe-68–Ser-285.

This sequence belongs to the radical SAM superfamily. Lipoyl synthase family. It depends on [4Fe-4S] cluster as a cofactor.

The protein resides in the cytoplasm. It carries out the reaction [[Fe-S] cluster scaffold protein carrying a second [4Fe-4S](2+) cluster] + N(6)-octanoyl-L-lysyl-[protein] + 2 oxidized [2Fe-2S]-[ferredoxin] + 2 S-adenosyl-L-methionine + 4 H(+) = [[Fe-S] cluster scaffold protein] + N(6)-[(R)-dihydrolipoyl]-L-lysyl-[protein] + 4 Fe(3+) + 2 hydrogen sulfide + 2 5'-deoxyadenosine + 2 L-methionine + 2 reduced [2Fe-2S]-[ferredoxin]. It participates in protein modification; protein lipoylation via endogenous pathway; protein N(6)-(lipoyl)lysine from octanoyl-[acyl-carrier-protein]: step 2/2. Catalyzes the radical-mediated insertion of two sulfur atoms into the C-6 and C-8 positions of the octanoyl moiety bound to the lipoyl domains of lipoate-dependent enzymes, thereby converting the octanoylated domains into lipoylated derivatives. The sequence is that of Lipoyl synthase from Syntrophotalea carbinolica (strain DSM 2380 / NBRC 103641 / GraBd1) (Pelobacter carbinolicus).